Consider the following 616-residue polypeptide: Dihydroxy-acid dehydratase (616 aa).

Asp-81 provides a ligand contact to Mg(2+). Cys-122 serves as a coordination point for [2Fe-2S] cluster. Residues Asp-123 and Lys-124 each coordinate Mg(2+). N6-carboxylysine is present on Lys-124. A [2Fe-2S] cluster-binding site is contributed by Cys-195. A Mg(2+)-binding site is contributed by Glu-491. The Proton acceptor role is filled by Ser-517.

This sequence belongs to the IlvD/Edd family. As to quaternary structure, homodimer. [2Fe-2S] cluster is required as a cofactor. Requires Mg(2+) as cofactor.

The enzyme catalyses (2R)-2,3-dihydroxy-3-methylbutanoate = 3-methyl-2-oxobutanoate + H2O. It carries out the reaction (2R,3R)-2,3-dihydroxy-3-methylpentanoate = (S)-3-methyl-2-oxopentanoate + H2O. It participates in amino-acid biosynthesis; L-isoleucine biosynthesis; L-isoleucine from 2-oxobutanoate: step 3/4. It functions in the pathway amino-acid biosynthesis; L-valine biosynthesis; L-valine from pyruvate: step 3/4. In terms of biological role, functions in the biosynthesis of branched-chain amino acids. Catalyzes the dehydration of (2R,3R)-2,3-dihydroxy-3-methylpentanoate (2,3-dihydroxy-3-methylvalerate) into 2-oxo-3-methylpentanoate (2-oxo-3-methylvalerate) and of (2R)-2,3-dihydroxy-3-methylbutanoate (2,3-dihydroxyisovalerate) into 2-oxo-3-methylbutanoate (2-oxoisovalerate), the penultimate precursor to L-isoleucine and L-valine, respectively. The polypeptide is Dihydroxy-acid dehydratase (Salmonella newport (strain SL254)).